A 120-amino-acid chain; its full sequence is Large ribosomal subunit protein bL19 (120 aa).

The protein belongs to the bacterial ribosomal protein bL19 family.

In terms of biological role, this protein is located at the 30S-50S ribosomal subunit interface and may play a role in the structure and function of the aminoacyl-tRNA binding site. The sequence is that of Large ribosomal subunit protein bL19 from Microcystis aeruginosa (strain NIES-843 / IAM M-2473).